Here is a 161-residue protein sequence, read N- to C-terminus: NADH:FMN oxidoreductase (161 aa).

Residues Asp30, 37–40 (AAST), 54–61 (CVQNSSTT), Ala88, Arg94, and Phe151 each bind FMN.

Belongs to the non-flavoprotein flavin reductase family.

The protein resides in the cytoplasm. The enzyme catalyses FMNH2 + NAD(+) = FMN + NADH + 2 H(+). It carries out the reaction FADH2 + NAD(+) = FAD + NADH + 2 H(+). Its pathway is sulfur metabolism; dibenzothiophene degradation. Functionally, an NADH:FMN oxidoreductase which supplies reduced FMN for the '4S' desulfurization pathway that removes covalently bound sulfur from dibenzothiophene (DBT) without breaking carbon-carbon bonds. Can also use FAD. Provides DszC and probably also DszA (DBT-monooxygenase and DBTO2-monooxygenase respectively) with reduced flavin (FMN and/or FAD). The polypeptide is NADH:FMN oxidoreductase (Mycolicibacterium goodii (Mycobacterium goodii)).